The following is an 86-amino-acid chain: MANIKSQQKRNKTNERARLRNKSVKSSLRTAVRAFREAAHAGDKEKAAELLVSTNRKLDKAASKGVIHKNQAANKKSALAQALNKL.

Residues 1–25 (MANIKSQQKRNKTNERARLRNKSVK) are disordered.

It belongs to the bacterial ribosomal protein bS20 family.

Functionally, binds directly to 16S ribosomal RNA. This Mycobacterium avium (strain 104) protein is Small ribosomal subunit protein bS20.